Here is a 22-residue protein sequence, read N- to C-terminus: Conotoxin MIIIJ (22 aa).

Q1 is modified (pyrrolidone carboxylic acid). 3 disulfides stabilise this stretch: C3/C21, C4/C19, and C9/C22.

This sequence belongs to the conotoxin M superfamily. Expressed by the venom duct.

Its subcellular location is the secreted. In terms of biological role, probable competitive antagonist of fish muscle acetylcholine receptor. Inhibits postsynaptic nicotinic acetylcholine receptors (nAChRs) from fish (zebrafish and goldfish) and frogs (IC(50)=0.1 uM). Protects these receptors from block by alpha-bungarotoxin and alpha-conotoxin EI. Does not block nAChRs at the neuromuscular junction of Rana pipiens. Shows a weak inhibition on mammalian adult and fetal muscle nAChRs (alpha-1-beta-1-delta-epsilon/CHRNA1-CHRNB1-CHRND-CHRNE and alpha-1 beta-1 gamma delta/CHRNA1-CHRNB1-CHRNG-CHRND) (IC(50)=3-45 uM). In vivo, induces paralysis in goldfish (Carassius auratus) but not mice. This Conus magus (Magical cone) protein is Conotoxin MIIIJ.